We begin with the raw amino-acid sequence, 352 residues long: Protein RecA (352 aa).

67 to 74 (GPESSGKT) is an ATP binding site.

Belongs to the RecA family.

It localises to the cytoplasm. Functionally, can catalyze the hydrolysis of ATP in the presence of single-stranded DNA, the ATP-dependent uptake of single-stranded DNA by duplex DNA, and the ATP-dependent hybridization of homologous single-stranded DNAs. It interacts with LexA causing its activation and leading to its autocatalytic cleavage. This is Protein RecA from Chlamydia trachomatis serovar A (strain ATCC VR-571B / DSM 19440 / HAR-13).